Here is a 101-residue protein sequence, read N- to C-terminus: MVKHSKGYRTRSRSLLRKSPRERGAVPSLSKLMVEYKEGDNVVVKINPSVHQGMPHRRYQGKVGKIIGKRGRAYLVSVTLGDKEKVIIVRPEHLVPFNSSG.

Residues 1-18 show a composition bias toward basic residues; sequence MVKHSKGYRTRSRSLLRK. Residues 1–24 are disordered; the sequence is MVKHSKGYRTRSRSLLRKSPRERG.

It belongs to the eukaryotic ribosomal protein eL21 family.

The chain is Large ribosomal subunit protein eL21 (rpl21e) from Saccharolobus solfataricus (strain ATCC 35092 / DSM 1617 / JCM 11322 / P2) (Sulfolobus solfataricus).